The chain runs to 213 residues: CASP-like protein UU2 (213 aa).

Residues 1-26 (MEDPKGAWQSDVFDNGRDFKPHDKAP) form a disordered region. The Cytoplasmic portion of the chain corresponds to 1-53 (MEDPKGAWQSDVFDNGRDFKPHDKAPANVTAGTTPPMYNVGAGGSEGNSKALS). Positions 14 to 25 (DNGRDFKPHDKA) are enriched in basic and acidic residues. The helical transmembrane segment at 54-74 (IISIVLRCLSIMFNVVSLGVI) threads the bilayer. The Extracellular segment spans residues 75-96 (ASNQGKSYFVVWRTLNSSNMQY). Residue asparagine 90 is glycosylated (N-linked (GlcNAc...) asparagine). Residues 97-117 (LFAINVIVLVYCVVQLILSII) form a helical membrane-spanning segment. Residues 118–137 (NLVQGKMVLSGPTQPASTIT) are Cytoplasmic-facing. The helical transmembrane segment at 138 to 158 (YICDQGLTYMLMAGFGAGVAL) threads the bilayer. Topologically, residues 159–184 (QASVDKGESGMLDCSGANEFCGKNKA) are extracellular. The helical transmembrane segment at 185 to 205 (SAALSFLGFVCIALSANLNYL) threads the bilayer. The Cytoplasmic segment spans residues 206 to 213 (RLYFMAAK).

It belongs to the Casparian strip membrane proteins (CASP) family. In terms of assembly, homodimer and heterodimers.

The protein resides in the cell membrane. This is CASP-like protein UU2 from Physcomitrium patens (Spreading-leaved earth moss).